The following is a 929-amino-acid chain: Facilitated trehalose transporter Tret1 (929 aa).

The disordered stretch occupies residues Met1–Ser275. Topologically, residues Met1–Pro462 are cytoplasmic. Positions Gly10 to Gly26 are enriched in gly residues. Residues Lys41–Glu59 are compositionally biased toward basic and acidic residues. Residues Ser60–Asp72 show a composition bias toward polar residues. Composition is skewed to low complexity over residues Ala85 to Arg141, Gln168 to Gln178, and Ser237 to Asp254. Phosphoserine is present on residues Ser320, Ser321, and Ser322. Residues Val352–Arg371 are disordered. Ser392 and Ser394 each carry phosphoserine. The segment at Phe398–Arg420 is disordered. Polar residues predominate over residues Arg402–Thr413. Residues Ile463–Gly483 traverse the membrane as a helical segment. Topologically, residues Phe484–Ser512 are extracellular. Residue Asn500 is glycosylated (N-linked (GlcNAc...) asparagine). Residues Trp513–Ile533 traverse the membrane as a helical segment. Residues Glu534–Thr541 lie on the Cytoplasmic side of the membrane. Residues Ile542–Val562 traverse the membrane as a helical segment. Residues Pro563 to Arg569 lie on the Extracellular side of the membrane. A helical membrane pass occupies residues Phe570–Thr590. Residues Val591–Arg596 are Cytoplasmic-facing. The helical transmembrane segment at Gly597 to Ala617 threads the bilayer. At Gly618–Ser624 the chain is on the extracellular side. A helical transmembrane segment spans residues Met625–Pro645. Over Glu646 to Pro708 the chain is Cytoplasmic. The chain crosses the membrane as a helical span at residues Leu709–Phe729. The Extracellular portion of the chain corresponds to Tyr730–Asn745. The chain crosses the membrane as a helical span at residues Val746–Ile766. Residues Asp767–Lys772 lie on the Cytoplasmic side of the membrane. A helical membrane pass occupies residues Ile773–Phe793. Residues Tyr794–Asn804 are Extracellular-facing. Residues Val805 to Gly825 form a helical membrane-spanning segment. At Pro826–Lys839 the chain is on the cytoplasmic side. Residues Ile840–Thr860 form a helical membrane-spanning segment. Residues Lys861 to His873 lie on the Extracellular side of the membrane. Residues Gly874–Val894 form a helical membrane-spanning segment. Over Pro895 to Met929 the chain is Cytoplasmic. Ser917 and Ser918 each carry phosphoserine.

It belongs to the major facilitator superfamily. Sugar transporter (TC 2.A.1.1) family. Trehalose transporter subfamily.

The protein localises to the cell membrane. In terms of biological role, low-capacity facilitative transporter for trehalose. Does not transport maltose, sucrose or lactose. Mediates the bidirectional transfer of trehalose. Responsible for the transport of trehalose synthesized in the fat body and the incorporation of trehalose into other tissues that require a carbon source, thereby regulating trehalose levels in the hemolymph. The protein is Facilitated trehalose transporter Tret1 of Drosophila grimshawi (Hawaiian fruit fly).